The chain runs to 157 residues: MSIEVNNESGVTVDEAQLVALARFVFERLYIHPQAELSILLVDEPAMEKLHLELMDEPGATDVLSVPMDELTPGTPDKPTPQGMLGDIAVCPQVAEVQARNAGHSTQDEMLLLTTHGILHLLGYDHADPEEKEEMFGLQRELLEGFTGKEAPSETMQ.

Zn(2+)-binding residues include His-116, His-120, and His-126.

It belongs to the endoribonuclease YbeY family. It depends on Zn(2+) as a cofactor.

Its subcellular location is the cytoplasm. In terms of biological role, single strand-specific metallo-endoribonuclease involved in late-stage 70S ribosome quality control and in maturation of the 3' terminus of the 16S rRNA. In Arthrobacter sp. (strain FB24), this protein is Endoribonuclease YbeY.